Consider the following 121-residue polypeptide: Protein p14.5 (121 aa).

A2 carries the N-acetylalanine; by host modification. The disordered stretch occupies residues 84–121 (SLVPDEADNKPEDDEESGGAKPKKKKHLFPKLSSHKSK). Over residues 104 to 121 (KPKKKKHLFPKLSSHKSK) the composition is skewed to basic residues.

The protein belongs to the asfivirus structural protein p14.5 family. In terms of assembly, interacts with the major capsid protein. Interacts with host IRF3; this interaction interferes with the recruitment of IRF3 to TBK1. Post-translationally, acetylated.

The protein localises to the virion. Its function is as follows. Structural protein required for transport of intracellular particles from the assembly sites to the plasma membrane. Binds to both ssDNA and dsDNA. Suppressed the activation of the cGAS/STING pathway by interfering with the recruitment of IRF3 to TBK1, which in turn suppresses IRF3 phosphorylation, decreasing interferon production. This chain is Protein p14.5, found in African swine fever virus (isolate Pig/Kenya/KEN-50/1950) (ASFV).